We begin with the raw amino-acid sequence, 223 residues long: Probable Brix domain-containing ribosomal biogenesis protein (223 aa).

A Brix domain is found at methionine 1–tryptophan 196.

Its function is as follows. Probably involved in the biogenesis of the ribosome. The protein is Probable Brix domain-containing ribosomal biogenesis protein of Pyrococcus furiosus (strain ATCC 43587 / DSM 3638 / JCM 8422 / Vc1).